The sequence spans 65 residues: uncharacterized protein (65 aa).

The protein resides in the plastid. It is found in the chloroplast. This is an uncharacterized protein from Guillardia theta (Cryptophyte).